We begin with the raw amino-acid sequence, 410 residues long: Probable intron-encoded endonuclease bI1 (410 aa).

The tract at residues 1 to 131 (MRLLKTHPIL…VLMMAIAFLG (131 aa)) is COB exon 1 encoded. A run of 3 helical transmembrane segments spans residues 32-52 (FGSLLGVCLIIQILTGVFLAM), 75-95 (GWLIRYLHANTASFFFIFVYL), and 112-132 (LLWSIGVIILVLMMAIAFLGF). The tract at residues 132 to 410 (FNGQKYMCFY…KKNYIVKVIK (279 aa)) is COB intron 1 encoded. Residues 196–286 (PFSGIYMIVN…LETLKPEYNI (91 aa)) form the GIY-YIG domain.

It to endonucleases of group I introns of fungi and phage. In terms of processing, the mature protein may arise from proteolytic cleavage of an in-frame translation of COB exon 1 plus intron 1, containing the bI1 open reading frame.

It localises to the mitochondrion. It is found in the membrane. Its function is as follows. Mitochondrial DNA endonuclease involved in intron homing. This chain is Probable intron-encoded endonuclease bI1 (bI1), found in Mycosarcoma maydis (Corn smut fungus).